Consider the following 103-residue polypeptide: Histone H4 (103 aa).

Gly residues predominate over residues 1-14 (MSGRGKGGKGLGKG). The tract at residues 1-20 (MSGRGKGGKGLGKGGAKRHR) is disordered. Residue S2 is modified to N-acetylserine. N6-acetyl-N6-methyllysine; alternate is present on residues K6 and K13. N6-acetyllysine is present on K17. Residues 17–21 (KRHRK) mediate DNA binding. Position 21 is an N6-methyllysine (K21).

The protein belongs to the histone H4 family. As to quaternary structure, the nucleosome is a histone octamer containing two molecules each of H2A, H2B, H3 and H4 assembled in one H3-H4 heterotetramer and two H2A-H2B heterodimers. The octamer wraps approximately 147 bp of DNA.

The protein localises to the nucleus. It is found in the chromosome. Functionally, core component of nucleosome. Nucleosomes wrap and compact DNA into chromatin, limiting DNA accessibility to the cellular machineries which require DNA as a template. Histones thereby play a central role in transcription regulation, DNA repair, DNA replication and chromosomal stability. DNA accessibility is regulated via a complex set of post-translational modifications of histones, also called histone code, and nucleosome remodeling. This chain is Histone H4 (H4DEKL), found in Dendronephthya klunzingeri (Klunzinger's soft coral).